We begin with the raw amino-acid sequence, 227 residues long: Uridylate kinase (227 aa).

9–10 (GS) provides a ligand contact to ATP. Glycine 44 lines the UMP pocket. Positions 45 and 49 each coordinate ATP. UMP contacts are provided by residues aspartate 66 and 114-120 (TVPGHTT). The ATP site is built by threonine 140, phenylalanine 146, and aspartate 149.

The protein belongs to the UMP kinase family. In terms of assembly, homohexamer.

Its subcellular location is the cytoplasm. The catalysed reaction is UMP + ATP = UDP + ADP. The protein operates within pyrimidine metabolism; CTP biosynthesis via de novo pathway; UDP from UMP (UMPK route): step 1/1. Inhibited by UTP. Catalyzes the reversible phosphorylation of UMP to UDP. The polypeptide is Uridylate kinase (Natronomonas pharaonis (strain ATCC 35678 / DSM 2160 / CIP 103997 / JCM 8858 / NBRC 14720 / NCIMB 2260 / Gabara) (Halobacterium pharaonis)).